The sequence spans 326 residues: ELAV-like protein 1 (326 aa).

At Ser-2 the chain carries N-acetylserine. Ser-2 bears the Phosphoserine mark. One can recognise an RRM 1 domain in the interval 20–98 (TNLIVNYLPQ…KTIKVSYARP (79 aa)). Phosphoserine occurs at positions 100 and 158. The RRM 2 domain maps to 106–186 (ANLYISGLPR…EPITVKFAAN (81 aa)). A Glycyl lysine isopeptide (Lys-Gly) (interchain with G-Cter in SUMO2) cross-link involves residue Lys-191. Phosphoserine occurs at positions 197 and 202. Arg-206 is modified (omega-N-methylarginine). Arg-217 is modified (asymmetric dimethylarginine; by CARM1; alternate). Arg-217 is subject to Omega-N-methylarginine; alternate. 2 positions are modified to phosphoserine: Ser-221 and Ser-318. The region spanning 244–322 (WCIFIYNLGQ…KILQVSFKTN (79 aa)) is the RRM 3 domain.

Belongs to the RRM elav family. In terms of assembly, monomer and homodimer (in vitro). Interacts with ANP32A. Interacts with ZNF385A; the interaction is indirect and mRNA-dependent and may regulate p53/TP53 expression. Identified in a mRNP complex, at least composed of DHX9, DDX3X, ELAVL1, HNRNPU, IGF2BP1, ILF3, PABPC1, PCBP2, PTBP2, STAU1, STAU2, SYNCRIP and YBX1. Interacts with AGO1 and AGO2. Interacts with IGF2BP1. Interacts with IGF2BP2 and IGF2BP3. Interacts with HNRNPL. Interacts with DHX36; this interaction occurs in a RNA-dependent manner. Interacts with ILF3; this interaction occurs in a RNA-dependent manner. Interacts with PLEKHN1. Interacts with SHFL; the interaction increases in presence of RNA. Interacts with YBX1; interaction recruits ELAVL1 on C5-methylcytosine (m5C)-containing mRNAs, thereby promoting mRNA stability. Interacts with FXR1. Phosphorylated by MAPKAPK2. Phosphorylated by PRKCD. Post-translationally, methylated at Arg-217 by CARM1 in T-cells in response to LPS challenge.

The protein localises to the cytoplasm. The protein resides in the nucleus. Its subcellular location is the stress granule. It localises to the P-body. In terms of biological role, RNA-binding protein that binds to the 3'-UTR region of mRNAs and increases their stability. Involved in embryonic stem cell (ESC) differentiation: preferentially binds mRNAs that are not methylated by N6-methyladenosine (m6A), stabilizing them, promoting ESC differentiation. Has also been shown to be capable of binding to m6A-containing mRNAs and contributes to MYC stability by binding to m6A-containing MYC mRNAs. Binds to poly-U elements and AU-rich elements (AREs) in the 3'-UTR of target mRNAs. Binds avidly to the AU-rich element in FOS and IL3/interleukin-3 mRNAs. In the case of the FOS AU-rich element, binds to a core element of 27 nucleotides that contain AUUUA, AUUUUA, and AUUUUUA motifs. Binds preferentially to the 5'-UUUU[AG]UUU-3' motif in vitro. With ZNF385A, binds the 3'-UTR of p53/TP53 mRNA to control their nuclear export induced by CDKN2A. Hence, may regulate p53/TP53 expression and mediate in part the CDKN2A anti-proliferative activity. May also bind with ZNF385A the CCNB1 mRNA. Increases the stability of the leptin mRNA harboring an AU-rich element (ARE) in its 3' UTR. This is ELAV-like protein 1 (Elavl1) from Mus musculus (Mouse).